Reading from the N-terminus, the 160-residue chain is Putative pre-16S rRNA nuclease (160 aa).

Belongs to the YqgF nuclease family.

The protein resides in the cytoplasm. Functionally, could be a nuclease involved in processing of the 5'-end of pre-16S rRNA. The chain is Putative pre-16S rRNA nuclease from Chelativorans sp. (strain BNC1).